A 599-amino-acid chain; its full sequence is DNA mismatch repair protein MutL (599 aa).

Belongs to the DNA mismatch repair MutL/HexB family.

This protein is involved in the repair of mismatches in DNA. It is required for dam-dependent methyl-directed DNA mismatch repair. May act as a 'molecular matchmaker', a protein that promotes the formation of a stable complex between two or more DNA-binding proteins in an ATP-dependent manner without itself being part of a final effector complex. The polypeptide is DNA mismatch repair protein MutL (Rhodopseudomonas palustris (strain BisB18)).